The following is an 80-amino-acid chain: Putative membrane protein insertion efficiency factor (80 aa).

A disordered region spans residues 61-80 (KTGKDPVPDHFSLKRNQEGE). The span at 62–80 (TGKDPVPDHFSLKRNQEGE) shows a compositional bias: basic and acidic residues.

The protein belongs to the UPF0161 family.

The protein resides in the cell membrane. Functionally, could be involved in insertion of integral membrane proteins into the membrane. This chain is Putative membrane protein insertion efficiency factor, found in Streptococcus pneumoniae (strain 70585).